Reading from the N-terminus, the 205-residue chain is Small ribosomal subunit protein uS4 (205 aa).

The disordered stretch occupies residues 18–46 (NIWGRPKSPVNSRAYGPGQHGQRRKSKVS). An S4 RNA-binding domain is found at 94–155 (SRLDAVVYRA…RSRNMALVLE (62 aa)).

It belongs to the universal ribosomal protein uS4 family. In terms of assembly, part of the 30S ribosomal subunit. Contacts protein S5. The interaction surface between S4 and S5 is involved in control of translational fidelity.

One of the primary rRNA binding proteins, it binds directly to 16S rRNA where it nucleates assembly of the body of the 30S subunit. Its function is as follows. With S5 and S12 plays an important role in translational accuracy. This Phenylobacterium zucineum (strain HLK1) protein is Small ribosomal subunit protein uS4.